A 255-amino-acid chain; its full sequence is Pre-miRNA 5'-monophosphate methyltransferase (255 aa).

S-adenosyl-L-methionine contacts are provided by residues R32, N66, D96, 121–122 (DI), and M150. Residues 41 to 253 (LHKLFRKPAE…SLLLFKIQRH (213 aa)) enclose the Bin3-type SAM domain.

The protein belongs to the methyltransferase superfamily.

Its subcellular location is the cytoplasm. The catalysed reaction is a 5'-end 5'-phospho-ribonucleoside-RNA + S-adenosyl-L-methionine = a 5'-end (5'-methylphospho)-ribonucleoside-RNA + S-adenosyl-L-homocysteine. The enzyme catalyses a 5'-end 5'-phospho-ribonucleoside-RNA + 2 S-adenosyl-L-methionine = a 5'-end (5'-bismethylphospho)-ribonucleoside-RNA + 2 S-adenosyl-L-homocysteine. Functionally, O-methyltransferase that specifically monomethylates 5'-monophosphate of cytoplasmic histidyl tRNA (tRNA(His)), acting as a capping enzyme by protecting tRNA(His) from cleavage by DICER1. Also able, with less efficiently, to methylate the 5' monophosphate of a subset of pre-miRNAs, acting as a negative regulator of miRNA processing. The 5' monophosphate of pre-miRNAs is recognized by DICER1 and is required for pre-miRNAs processing: methylation at this position reduces the processing of pre-miRNAs by DICER1. Was also reported to mediate dimethylation of pre-miR-145; however dimethylation cannot be reproduced by another group which observes a monomethylation of pre-miR-145. This is Pre-miRNA 5'-monophosphate methyltransferase (bcdin3d) from Xenopus laevis (African clawed frog).